The sequence spans 385 residues: 3-dehydroquinate synthase (385 aa).

NAD(+) is bound by residues 122–126 (GVIGD), 146–147 (TT), K159, and K168. 3 residues coordinate Zn(2+): E201, H264, and H282.

It belongs to the sugar phosphate cyclases superfamily. Dehydroquinate synthase family. The cofactor is Co(2+). Requires Zn(2+) as cofactor. It depends on NAD(+) as a cofactor.

The protein resides in the cytoplasm. It catalyses the reaction 7-phospho-2-dehydro-3-deoxy-D-arabino-heptonate = 3-dehydroquinate + phosphate. It participates in metabolic intermediate biosynthesis; chorismate biosynthesis; chorismate from D-erythrose 4-phosphate and phosphoenolpyruvate: step 2/7. In terms of biological role, catalyzes the conversion of 3-deoxy-D-arabino-heptulosonate 7-phosphate (DAHP) to dehydroquinate (DHQ). The sequence is that of 3-dehydroquinate synthase from Rhodospirillum rubrum (strain ATCC 11170 / ATH 1.1.1 / DSM 467 / LMG 4362 / NCIMB 8255 / S1).